Consider the following 297-residue polypeptide: 4-hydroxy-tetrahydrodipicolinate synthase (297 aa).

Position 47 (Thr47) interacts with pyruvate. Residue Tyr135 is the Proton donor/acceptor of the active site. Lys163 functions as the Schiff-base intermediate with substrate in the catalytic mechanism. Position 205 (Ile205) interacts with pyruvate.

This sequence belongs to the DapA family. Homotetramer; dimer of dimers.

It localises to the cytoplasm. The enzyme catalyses L-aspartate 4-semialdehyde + pyruvate = (2S,4S)-4-hydroxy-2,3,4,5-tetrahydrodipicolinate + H2O + H(+). It participates in amino-acid biosynthesis; L-lysine biosynthesis via DAP pathway; (S)-tetrahydrodipicolinate from L-aspartate: step 3/4. In terms of biological role, catalyzes the condensation of (S)-aspartate-beta-semialdehyde [(S)-ASA] and pyruvate to 4-hydroxy-tetrahydrodipicolinate (HTPA). The polypeptide is 4-hydroxy-tetrahydrodipicolinate synthase (Cytophaga hutchinsonii (strain ATCC 33406 / DSM 1761 / CIP 103989 / NBRC 15051 / NCIMB 9469 / D465)).